The primary structure comprises 98 residues: uncharacterized protein (98 aa).

2 helical membrane passes run 2–22 and 70–90; these read IVTL…GLWW and AAKA…LPIL.

It localises to the cell membrane. This is an uncharacterized protein from Sinorhizobium fredii (strain NBRC 101917 / NGR234).